The following is a 78-amino-acid chain: Myrmicitoxin-Ta2a (78 aa).

The first 26 residues, 1–26 (MKLSFLSLALAIIFVTVLIYAPQAEA), serve as a signal peptide directing secretion. The propeptide occupies 27–56 (KALADAVADADADADAAADAVADALADADA). Lys-77 carries the lysine amide modification.

It belongs to the formicidae venom precursor-01 superfamily. As to expression, expressed by the venom gland.

Its subcellular location is the secreted. In terms of biological role, peptide with toxicity towards insects that may also act as antimicrobial peptide. Causes calcium influx in F11 cells (EC(50)=5.8 nM), possibly by modulating sodium channels (Nav). In vivo, is lethal to insects, but does not show toxicity to vertebrates. Intraplantar injection into mice does not induce spontaneous nocifensive behaviors up to a dose of 200 pmol. This is Myrmicitoxin-Ta2a from Tetramorium africanum (Fierce ant).